The chain runs to 415 residues: Maltose excess protein 1, chloroplastic (415 aa).

The interval 74-93 (SESDSDSDFPHENQQGNPGL) is disordered. The next 9 helical transmembrane spans lie at 139-159 (ALSA…LSLL), 176-196 (LGVV…AMPI), 199-219 (FVAT…YYFG), 231-251 (DVIT…TFVP), 252-272 (LVPN…AAII), 286-306 (FVGS…PVSQ), 322-342 (SITM…ALFI), 345-365 (LMWL…NILC), and 373-393 (SQSF…LALW).

Expressed in leaves and roots. Expressed in root cap cells.

The protein localises to the plastid. The protein resides in the chloroplast inner membrane. Its function is as follows. Probable maltose transporter. Essential for the conversion of starch to sucrose in leaves at night, probably via the export of maltose from the chloroplast. Required for root cap cells formation. The sequence is that of Maltose excess protein 1, chloroplastic (MEX1) from Arabidopsis thaliana (Mouse-ear cress).